We begin with the raw amino-acid sequence, 301 residues long: 4-diphosphocytidyl-2-C-methyl-D-erythritol kinase (301 aa).

Residue lysine 18 is part of the active site. Residue 109-119 participates in ATP binding; sequence PIASGIGGGSA. The active site involves aspartate 151.

The protein belongs to the GHMP kinase family. IspE subfamily.

It catalyses the reaction 4-CDP-2-C-methyl-D-erythritol + ATP = 4-CDP-2-C-methyl-D-erythritol 2-phosphate + ADP + H(+). The protein operates within isoprenoid biosynthesis; isopentenyl diphosphate biosynthesis via DXP pathway; isopentenyl diphosphate from 1-deoxy-D-xylulose 5-phosphate: step 3/6. Functionally, catalyzes the phosphorylation of the position 2 hydroxy group of 4-diphosphocytidyl-2C-methyl-D-erythritol. The polypeptide is 4-diphosphocytidyl-2-C-methyl-D-erythritol kinase (Rhizobium meliloti (strain 1021) (Ensifer meliloti)).